Here is a 115-residue protein sequence, read N- to C-terminus: uncharacterized protein (115 aa).

This is an uncharacterized protein from Haemophilus influenzae (strain ATCC 51907 / DSM 11121 / KW20 / Rd).